Reading from the N-terminus, the 167-residue chain is Caffeine dehydrogenase subunit gamma (167 aa).

Positions 4-80 (HVISLTVNGQ…GHSIRTVEAL (77 aa)) constitute a 2Fe-2S ferredoxin-type domain. Residues Cys-42, Cys-47, Cys-50, and Cys-62 each coordinate [2Fe-2S] cluster.

In terms of assembly, heterotrimer composed of an alpha (CdhA), a beta (CdhB) and a gamma (CdhC) subunit.

It catalyses the reaction caffeine + a ubiquinone + H2O = 1,3,7-trimethylurate + a ubiquinol. The catalysed reaction is ubiquinone-0 + caffeine + H2O = ubiquinol-0 + 1,3,7-trimethylurate. It carries out the reaction theobromine + a ubiquinone + H2O = 3,7-dimethylurate + a ubiquinol. Functionally, component of the caffeine dehydrogenase complex that catalyzes the hydrolytical oxidation of 1,3,7-trimethylxanthine (caffeine) by incorporation of an oxygen atom originating from a water molecule into position C-8 to produce 1,3,7-trimethyluric acid (TMU). Coenzyme Q0 (ubiquinone-0) is the preferred electron acceptor and, to a lesser extent, coenzyme Q2 (ubiquinone-2) can also be used, but oxygen and NAD(P)(+) cannot. Is involved in a caffeine degradation pathway that allows Pseudomonas sp. strain CBB1 to grow on caffeine as the sole carbon and nitrogen source. Is also active with theobromine as substrate, but shows a very poor activity with theophylline and is not active with xanthine, 3-methylxanthine, 7-methylxanthine, TMU, and 3,7-dimethylurate. This chain is Caffeine dehydrogenase subunit gamma, found in Pseudomonas sp. (strain CBB1).